The following is an 85-amino-acid chain: Toxin BmKa3 (85 aa).

Positions 1–19 are cleaved as a signal peptide; that stretch reads MNYLVFFSLALLLMTGVES. The region spanning 21–83 is the LCN-type CS-alpha/beta domain; that stretch reads RDGYIADDKN…VPIRVPGKCN (63 aa). 4 disulfide bridges follow: cysteine 31–cysteine 82, cysteine 35–cysteine 55, cysteine 41–cysteine 65, and cysteine 45–cysteine 67.

This sequence belongs to the long (4 C-C) scorpion toxin superfamily. Sodium channel inhibitor family. Alpha subfamily. As to expression, expressed by the venom gland.

It is found in the secreted. In terms of biological role, alpha toxins bind voltage-independently at site-3 of sodium channels (Nav) and inhibit the inactivation of the activated channels, thereby blocking neuronal transmission. This is Toxin BmKa3 from Olivierus martensii (Manchurian scorpion).